Consider the following 396-residue polypeptide: Zinc metalloproteinase nas-19 (396 aa).

Positions 1-20 (MVRLIHLIGAIILLFSYAYC) are cleaved as a signal peptide. The Peptidase M12A domain occupies 38–231 (RVKRQFERLG…YKINQYYGCW (194 aa)). Asn79 carries an N-linked (GlcNAc...) asparagine glycan. 4 cysteine pairs are disulfide-bonded: Cys82–Cys230, Cys105–Cys130, Cys232–Cys252, and Cys254–Cys263. His138 serves as a coordination point for Zn(2+). The active site involves Glu139. The Zn(2+) site is built by His142 and His148. An EGF-like domain is found at 225 to 264 (NQYYGCWCSKQLECKNGGYTSPSDCSRCNCPKGFFGNLCD). Asn310 carries N-linked (GlcNAc...) asparagine glycosylation.

Zn(2+) is required as a cofactor.

The protein localises to the secreted. Metalloprotease. In Caenorhabditis elegans, this protein is Zinc metalloproteinase nas-19 (nas-19).